We begin with the raw amino-acid sequence, 588 residues long: Arylsulfatase L (588 aa).

Positions 1 to 31 (MLHLHHSWLCFRSWLAGMLSVLLGLVPSASS) are cleaved as a signal peptide. N32 is a glycosylation site (N-linked (GlcNAc...) asparagine). 2 residues coordinate Ca(2+): D46 and D47. N58 carries an N-linked (GlcNAc...) asparagine glycan. Residue C86 coordinates Ca(2+). C86 serves as the catalytic Nucleophile. C86 carries the post-translational modification 3-oxoalanine (Cys). N-linked (GlcNAc...) asparagine glycosylation occurs at N125. K145 serves as a coordination point for substrate. H147 is a catalytic residue. N-linked (GlcNAc...) asparagine glycosylation is present at N258. H301 is a binding site for substrate. An N-linked (GlcNAc...) asparagine glycan is attached at N344. Ca(2+)-binding residues include D353 and H354. K378 provides a ligand contact to substrate.

It belongs to the sulfatase family. It depends on Ca(2+) as a cofactor. The conversion to 3-oxoalanine (also known as C-formylglycine, FGly), of a serine or cysteine residue in prokaryotes and of a cysteine residue in eukaryotes, is critical for catalytic activity.

Its subcellular location is the golgi apparatus. It is found in the golgi stack. The catalysed reaction is an aryl sulfate + H2O = a phenol + sulfate + H(+). Functionally, exhibits arylsulfatase activity towards the artificial substrate 4-methylumbelliferyl sulfate. May be essential for the correct composition of cartilage and bone matrix during development. Has no activity toward steroid sulfates. This is Arylsulfatase L (ARSL) from Macaca fascicularis (Crab-eating macaque).